We begin with the raw amino-acid sequence, 319 residues long: Ribosomal RNA small subunit methyltransferase H (319 aa).

S-adenosyl-L-methionine-binding positions include 37–39 (GGH), Asp56, Leu90, Asp104, and Gln111.

The protein belongs to the methyltransferase superfamily. RsmH family.

It localises to the cytoplasm. The enzyme catalyses cytidine(1402) in 16S rRNA + S-adenosyl-L-methionine = N(4)-methylcytidine(1402) in 16S rRNA + S-adenosyl-L-homocysteine + H(+). Specifically methylates the N4 position of cytidine in position 1402 (C1402) of 16S rRNA. This chain is Ribosomal RNA small subunit methyltransferase H, found in Nocardioides sp. (strain ATCC BAA-499 / JS614).